We begin with the raw amino-acid sequence, 614 residues long: Type VII secretion system protein EssD (614 aa).

The disordered stretch occupies residues 417–445 (QNHVTHGPKDSMVRSEGKHSISSHEMNSS). Over residues 423–435 (GPKDSMVRSEGKH) the composition is skewed to basic and acidic residues.

Belongs to the EssD family. In terms of assembly, interacts (via C-terminal) with EssG; this interaction blocks EssD activity. Interacts with EssE.

Its subcellular location is the secreted. It is found in the cell membrane. Component of the type VII secretion system (Ess). Plays a role in Ess secretion during infection. Required for the efficient secretion of EsxA. Required for abscess formation and staphylococcal persistence in host tissues. Possesses a toxic DNase activity that is modulated by EsaG by forming a nuclease toxin-antitoxin pair. This nuclease toxin targets competitor bacteria. The polypeptide is Type VII secretion system protein EssD (Staphylococcus aureus (strain USA300)).